The following is a 444-amino-acid chain: Phosphoglucosamine mutase (444 aa).

Residue serine 104 is the Phosphoserine intermediate of the active site. Mg(2+)-binding residues include serine 104, aspartate 243, aspartate 245, and aspartate 247. Serine 104 carries the post-translational modification Phosphoserine.

The protein belongs to the phosphohexose mutase family. The cofactor is Mg(2+). Post-translationally, activated by phosphorylation.

It carries out the reaction alpha-D-glucosamine 1-phosphate = D-glucosamine 6-phosphate. Its function is as follows. Catalyzes the conversion of glucosamine-6-phosphate to glucosamine-1-phosphate. This chain is Phosphoglucosamine mutase, found in Neisseria meningitidis serogroup B (strain ATCC BAA-335 / MC58).